The chain runs to 446 residues: N-succinylarginine dihydrolase (446 aa).

Substrate is bound by residues 21–30, Asn-112, and 139–140; these read AGLSWGNVAS and HR. Glu-176 is an active-site residue. Substrate is bound at residue Arg-216. His-252 is a catalytic residue. Substrate contacts are provided by Asp-254 and Asn-364. Cys-370 serves as the catalytic Nucleophile.

Belongs to the succinylarginine dihydrolase family. Homodimer.

It carries out the reaction N(2)-succinyl-L-arginine + 2 H2O + 2 H(+) = N(2)-succinyl-L-ornithine + 2 NH4(+) + CO2. The protein operates within amino-acid degradation; L-arginine degradation via AST pathway; L-glutamate and succinate from L-arginine: step 2/5. Catalyzes the hydrolysis of N(2)-succinylarginine into N(2)-succinylornithine, ammonia and CO(2). This is N-succinylarginine dihydrolase from Marinobacter nauticus (strain ATCC 700491 / DSM 11845 / VT8) (Marinobacter aquaeolei).